The primary structure comprises 60 residues: Large ribosomal subunit protein bL32 (60 aa).

Positions 1 to 60 (MAVQQNKKSPSKRGMHRSHDFLVNPPTAIEPTTGESHLRHHISPNGFYRGRKILKTKADE) are disordered. Over residues 49–60 (RGRKILKTKADE) the composition is skewed to basic residues.

The protein belongs to the bacterial ribosomal protein bL32 family.

This chain is Large ribosomal subunit protein bL32, found in Bordetella avium (strain 197N).